The chain runs to 394 residues: S-adenosylmethionine synthase (394 aa).

An ATP-binding site is contributed by H18. A Mg(2+)-binding site is contributed by D20. E46 is a binding site for K(+). Residues E59 and Q102 each coordinate L-methionine. A flexible loop region spans residues 102 to 112 (QSPDIDMGVSA). Residues 175 to 177 (DGK), D250, 256 to 257 (RK), A273, and K277 contribute to the ATP site. D250 contributes to the L-methionine binding site. K281 lines the L-methionine pocket.

This sequence belongs to the AdoMet synthase family. As to quaternary structure, homotetramer; dimer of dimers. Requires Mg(2+) as cofactor. It depends on K(+) as a cofactor.

It localises to the cytoplasm. The enzyme catalyses L-methionine + ATP + H2O = S-adenosyl-L-methionine + phosphate + diphosphate. It participates in amino-acid biosynthesis; S-adenosyl-L-methionine biosynthesis; S-adenosyl-L-methionine from L-methionine: step 1/1. In terms of biological role, catalyzes the formation of S-adenosylmethionine (AdoMet) from methionine and ATP. The overall synthetic reaction is composed of two sequential steps, AdoMet formation and the subsequent tripolyphosphate hydrolysis which occurs prior to release of AdoMet from the enzyme. The chain is S-adenosylmethionine synthase from Brachyspira hyodysenteriae (strain ATCC 49526 / WA1).